The following is a 194-amino-acid chain: Probable thymidylate kinase (194 aa).

9-16 (GIDGVGKS) is a binding site for ATP.

Belongs to the thymidylate kinase family.

It carries out the reaction dTMP + ATP = dTDP + ADP. The polypeptide is Probable thymidylate kinase (Methanopyrus kandleri (strain AV19 / DSM 6324 / JCM 9639 / NBRC 100938)).